The sequence spans 1365 residues: MGGKNKKHKAPGAAAMRAAVSASRARSAEAGAVGEAQSKKPVARPAPAVPTGAREPRVKQGPKIYSFNSANDSGGSANLDKSILKVVINNKLEQRIIGVINEHKKQNSDRGAISGRLSAKKLQDLYMALQAFSFKTKDIEDAMTNTLLHGGDLHSALDWLCLNLSDDALPEGFSQEFEEQQPKSRPKFQSVQIQATLSPPQQTKTKRQEEDPKIKPKKEETTVEVNMKEWILRYAEQQDEEEKGEGSKGLEEEEKFDPNQRYLNLAARLLDAKEQAAAFKLEKNKQGQKEAQEKIRKFQREMETLEDHPIFNPAIKISHQQNEKKKPAPATEAESALNLNLFEKSAAATEEEKGKKKEPHDVRNFDYTARSWTGKSPKQFLIDWVRKNLPKSPNPSFEKVAVGRYWKCRVRVVRSEDDVLVVCPTILTEDGMQAQHLGATLALYRLVKGQSVHQLLPPTYRDVWLEWSDEEKKREELNKMETNKPRDLFIAKLLNKLKQQQQQQQQQRPESEKGGSEDPEESWENLVSDEDLAALSLEPTSAEDLAPVRSLFRRLQSTPKYQRLLKERQQLPVFKHRDSIVETLKRHRVVVVAGETGSGKSTQVPHFLLEDLLLDECGARKCNIVCTQPRRISAVSLATRVCEELGCESGPGGRNSLCGYQIRMESRASESTRLLYCTTGVLLRKLQEDGLLADVSHVIVDEVHERSVQSDFLLVILKEILQKRSDLHLILMSATVDSDKFSTYFTHCPILRISGRSYPVEVFHLEDIVEETGFVLEKDSEYCQKFLEEEEEITINVTSKAGGVKKYQEYIPVQSGASPELNPFYQKYSSRTQHAILYMNPHKINLDLILELLVYLDKSPQFRNIEGAVLIFLPGLAHIQQLYDLLSSDRRFYSERYQVIALHSVLSTQDQAAAFMFPPPGVRKIVLATNIAETGITIPDVVFVIDTGRTKENKYHESSQMSSLVETFVSKASALQRQGRAGRVRDGFCFRLYTRERFEGFLDYSVPEILRVPLEELCLHIMKCDLGSPEDFLSKALDPPQLQVISNAMNLLRKIGACEPNEPKLTPLGQHLAALPVNVKIGKMLIFGAIFGCLEPVATLAAVMTEKSPFITPIGRKDEADLAKSSLAVADSDHLTIYNAYLGWKKAQQEGGFRSEISYCQRNFLNRTSLLTLEDVKQELMKLVKAAGFSSSPSWEGRKGPQTLSFQDIALLKAVLAAGLYDSVGKIMCTKSVDVTEKLACMVETAQGKAQVHPSSVNRDLQTYGWLLYQEKVRYTRVYLRETTLITPFPVLLFGGDIEVQHRERLLSVDGWIYFQAPVKIAVIFKQLRVLIDSVLRKKLENPKMSLENDKILQIITELIKTENN.

Positions 1-10 (MGGKNKKHKA) are enriched in basic residues. Disordered stretches follow at residues 1–74 (MGGK…NDSG), 174–222 (SQEF…EETT), and 235–257 (AEQQ…EKFD). 2 stretches are compositionally biased toward low complexity: residues 11–36 (PGAA…VGEA) and 43–53 (ARPAPAVPTGA). Phosphoserine occurs at positions 69, 190, and 198. Polar residues predominate over residues 187-203 (KFQSVQIQATLSPPQQT). Over residues 206–222 (KRQEEDPKIKPKKEETT) the composition is skewed to basic and acidic residues. Residues 281–308 (LEKNKQGQKEAQEKIRKFQREMETLEDH) are a coiled coil. The interval 500 to 524 (QQQQQQQQRPESEKGGSEDPEESWE) is disordered. The 174-residue stretch at 581 to 754 (VETLKRHRVV…FTHCPILRIS (174 aa)) folds into the Helicase ATP-binding domain. ATP is bound at residue 594–601 (GETGSGKS). The DEAH box signature appears at 701–704 (DEVH). Residues 848–1025 (LILELLVYLD…ELCLHIMKCD (178 aa)) form the Helicase C-terminal domain.

Belongs to the DEAD box helicase family. DEAH subfamily. Part of the 43S pre-initiation complex (PIC) that contains at least Met-tRNA, EIF1, EIF1A (EIF1AX or EIF1AY), EIF2S1, EIF2S2, EIF2S3, EIF3A, EIF3B, EIF3C, EIF3D, EIF3E, EIF3F, EIF3G, EIF3H, EIF3I, EIF3J, EIF3K, EIF3L, EIF3M, DHX29 and the 40S ribosomal subunit.

It localises to the cytoplasm. The enzyme catalyses ATP + H2O = ADP + phosphate + H(+). Its function is as follows. ATP-binding RNA helicase involved in translation initiation. Part of the 43S pre-initiation complex that is required for efficient initiation on mRNAs of higher eukaryotes with structured 5'-UTRs by promoting efficient NTPase-dependent 48S complex formation. Specifically binds to the 40S ribosome near the mRNA entrance. Does not possess a processive helicase activity. This Mus musculus (Mouse) protein is ATP-dependent RNA helicase DHX29.